We begin with the raw amino-acid sequence, 208 residues long: Small ribosomal subunit protein uS4 (208 aa).

Residues 98-164 (SRLDNVVYRM…DRIKFALELA (67 aa)) form the S4 RNA-binding domain.

It belongs to the universal ribosomal protein uS4 family. Part of the 30S ribosomal subunit. Contacts protein S5. The interaction surface between S4 and S5 is involved in control of translational fidelity.

Functionally, one of the primary rRNA binding proteins, it binds directly to 16S rRNA where it nucleates assembly of the body of the 30S subunit. With S5 and S12 plays an important role in translational accuracy. The polypeptide is Small ribosomal subunit protein uS4 (Nitrosococcus oceani (strain ATCC 19707 / BCRC 17464 / JCM 30415 / NCIMB 11848 / C-107)).